Reading from the N-terminus, the 65-residue chain is Small ribosomal subunit protein bS21B (65 aa).

This sequence belongs to the bacterial ribosomal protein bS21 family.

The protein is Small ribosomal subunit protein bS21B of Francisella tularensis subsp. holarctica (strain LVS).